A 443-amino-acid polypeptide reads, in one-letter code: Thymidine phosphorylase (443 aa).

This sequence belongs to the thymidine/pyrimidine-nucleoside phosphorylase family. As to quaternary structure, homodimer.

The catalysed reaction is thymidine + phosphate = 2-deoxy-alpha-D-ribose 1-phosphate + thymine. It participates in pyrimidine metabolism; dTMP biosynthesis via salvage pathway; dTMP from thymine: step 1/2. The enzymes which catalyze the reversible phosphorolysis of pyrimidine nucleosides are involved in the degradation of these compounds and in their utilization as carbon and energy sources, or in the rescue of pyrimidine bases for nucleotide synthesis. The polypeptide is Thymidine phosphorylase (Shewanella baltica (strain OS195)).